Here is a 239-residue protein sequence, read N- to C-terminus: Putative CRISPR-associated endoribonuclease-like protein Cas6nc (239 aa).

It belongs to the CRISPR-associated protein Cas6/Cse3/CasE family. As to quaternary structure, monomer; homodimer when crystallized in the presence of crRNA. Varying the crRNA sequence varies degree of oligomerization and structure.

CRISPR (clustered regularly interspaced short palindromic repeat), is an adaptive immune system that provides protection against mobile genetic elements (viruses, transposable elements and conjugative plasmids). CRISPR clusters contain sequences complementary to antecedent mobile elements and target invading nucleic acids. CRISPR clusters are transcribed and processed into CRISPR RNA (crRNA), also called psiRNA (prokaryotic silencing) in this organism (Potential). The sequence is that of Putative CRISPR-associated endoribonuclease-like protein Cas6nc (cas6nc) from Pyrococcus horikoshii (strain ATCC 700860 / DSM 12428 / JCM 9974 / NBRC 100139 / OT-3).